Reading from the N-terminus, the 706-residue chain is DNA ligase (706 aa).

NAD(+) is bound by residues 40 to 44 (DLQYD), 89 to 90 (SI), and E120. Catalysis depends on K122, which acts as the N6-AMP-lysine intermediate. 4 residues coordinate NAD(+): R143, E190, K306, and K330. Zn(2+) is bound by residues C424, C427, C442, and C447. Residues 625–706 (EANLPLAGKN…FRLRYETEAT (82 aa)) enclose the BRCT domain.

The protein belongs to the NAD-dependent DNA ligase family. LigA subfamily. Requires Mg(2+) as cofactor. Mn(2+) serves as cofactor.

The catalysed reaction is NAD(+) + (deoxyribonucleotide)n-3'-hydroxyl + 5'-phospho-(deoxyribonucleotide)m = (deoxyribonucleotide)n+m + AMP + beta-nicotinamide D-nucleotide.. In terms of biological role, DNA ligase that catalyzes the formation of phosphodiester linkages between 5'-phosphoryl and 3'-hydroxyl groups in double-stranded DNA using NAD as a coenzyme and as the energy source for the reaction. It is essential for DNA replication and repair of damaged DNA. In Rhodopirellula baltica (strain DSM 10527 / NCIMB 13988 / SH1), this protein is DNA ligase.